A 159-amino-acid chain; its full sequence is UPF0699 transmembrane protein YdbS (159 aa).

The next 2 membrane-spanning stretches (helical) occupy residues 22 to 42 (IIISAVCLLIVIAVAVLSYYF) and 47 to 67 (WISGVLGAVWLLGSIVTVFII).

Belongs to the UPF0699 family.

It localises to the cell membrane. The protein is UPF0699 transmembrane protein YdbS (ydbS) of Bacillus subtilis (strain 168).